A 96-amino-acid polypeptide reads, in one-letter code: Co-chaperonin GroES (96 aa).

This sequence belongs to the GroES chaperonin family. In terms of assembly, heptamer of 7 subunits arranged in a ring. Interacts with the chaperonin GroEL.

The protein resides in the cytoplasm. Its function is as follows. Together with the chaperonin GroEL, plays an essential role in assisting protein folding. The GroEL-GroES system forms a nano-cage that allows encapsulation of the non-native substrate proteins and provides a physical environment optimized to promote and accelerate protein folding. GroES binds to the apical surface of the GroEL ring, thereby capping the opening of the GroEL channel. This chain is Co-chaperonin GroES, found in Aromatoleum aromaticum (strain DSM 19018 / LMG 30748 / EbN1) (Azoarcus sp. (strain EbN1)).